Reading from the N-terminus, the 174-residue chain is uncharacterized protein (174 aa).

The interval 153-174 (RSGNHSAGNVHPASPMIKVQGG) is disordered.

This is an uncharacterized protein from Sinorhizobium fredii (strain NBRC 101917 / NGR234).